The chain runs to 82 residues: Protein Vpu (82 aa).

Residues 1–7 (MQPLQIS) are Extracellular-facing. Residues 8–28 (AIVALVVAAIIAIVVWSIALL) form a helical membrane-spanning segment. Over 29 to 82 (EYRKLLRQRKIDRLIDRIRERAEDSGNESEGDQEELSALVEMGGHDAPWDIDDL) the chain is Cytoplasmic. Phosphoserine; by host CK2 occurs at positions 53 and 57.

This sequence belongs to the HIV-1 VPU protein family. Homopentamer. Interacts with host CD4 and BRTC; these interactions induce proteasomal degradation of CD4. Interacts with host BST2; this interaction leads to the degradation of host BST2. Interacts with host FBXW11. Interacts with host AP1M1; this interaction plays a role in the mistrafficking and subsequent degradation of host BST2. Interacts with host RANBP2; this interaction allows Vpu to down-regulate host BLM sumoylation. Phosphorylated by host CK2. This phosphorylation is necessary for interaction with human BTRC and degradation of CD4.

It localises to the host membrane. Ion channel activity is inhibited by hexamethylene amiloride in vitro. In terms of biological role, enhances virion budding by targeting host CD4 and Tetherin/BST2 to proteasome degradation. Degradation of CD4 prevents any unwanted premature interactions between viral Env and its host receptor CD4 in the endoplasmic reticulum. Degradation of antiretroviral protein Tetherin/BST2 is important for virion budding, as BST2 tethers new viral particles to the host cell membrane. Mechanistically, Vpu bridges either CD4 or BST2 to BTRC, a substrate recognition subunit of the Skp1/Cullin/F-box protein E3 ubiquitin ligase, induces their ubiquitination and subsequent proteasomal degradation. The alteration of the E3 ligase specificity by Vpu seems to promote the degradation of host IKBKB, leading to NF-kappa-B down-regulation and subsequent apoptosis. Acts as a viroporin that forms an oligomeric ion channel in membranes. Modulates the host DNA repair mechanisms to promote degradation of nuclear viral cDNA in cells that are already productively infected in order to suppress immune sensing and proviral hyper-integration (superinfection). Manipulates PML-NBs and modulates SUMOylation of host BLM protein thereby enhancing its DNA-end processing activity toward viral unintegrated linear DNA. Also inhibits RAD52-mediated homologous repair of viral cDNA, preventing the generation of dead-end circular forms of single copies of the long terminal repeat and permitting sustained nucleolytic attack. This chain is Protein Vpu, found in Homo sapiens (Human).